The following is a 122-amino-acid chain: MIQQESRLKVADNSGAREILTIKVLGGSGRKFANIGDMIVATVKQAIPGGTVKKGDVVKAVIVRTVSGVHRIDGSYIKFDENAAVIVRDDKSPVGTRIFGPVARELRDNNYMRIVSLAPEVL.

Belongs to the universal ribosomal protein uL14 family. Part of the 50S ribosomal subunit. Forms a cluster with proteins L3 and L19. In the 70S ribosome, L14 and L19 interact and together make contacts with the 16S rRNA in bridges B5 and B8.

Functionally, binds to 23S rRNA. Forms part of two intersubunit bridges in the 70S ribosome. The polypeptide is Large ribosomal subunit protein uL14 (Oenococcus oeni (strain ATCC BAA-331 / PSU-1)).